The chain runs to 458 residues: Argininosuccinate lyase (458 aa).

This sequence belongs to the lyase 1 family. Argininosuccinate lyase subfamily.

Its subcellular location is the cytoplasm. The catalysed reaction is 2-(N(omega)-L-arginino)succinate = fumarate + L-arginine. Its pathway is amino-acid biosynthesis; L-arginine biosynthesis; L-arginine from L-ornithine and carbamoyl phosphate: step 3/3. The sequence is that of Argininosuccinate lyase from Actinobacillus pleuropneumoniae serotype 7 (strain AP76).